Here is a 60-residue protein sequence, read N- to C-terminus: Large ribosomal subunit protein uL30 (60 aa).

The protein belongs to the universal ribosomal protein uL30 family. In terms of assembly, part of the 50S ribosomal subunit.

This Nocardioides sp. (strain ATCC BAA-499 / JS614) protein is Large ribosomal subunit protein uL30.